The primary structure comprises 680 residues: DNA ligase 1 (680 aa).

NAD(+)-binding positions include 35–39, 84–85, and D115; these read DAEYD and SL. K117 (N6-AMP-lysine intermediate) is an active-site residue. NAD(+) is bound by residues R138, E175, K295, and K319. Zn(2+)-binding residues include C413, C416, C431, and C436. The 82-residue stretch at 599-680 folds into the BRCT domain; it reads REGSQLQGLK…FANLLKGLDR (82 aa).

It belongs to the NAD-dependent DNA ligase family. LigA subfamily. The cofactor is Mg(2+). Requires Mn(2+) as cofactor.

It carries out the reaction NAD(+) + (deoxyribonucleotide)n-3'-hydroxyl + 5'-phospho-(deoxyribonucleotide)m = (deoxyribonucleotide)n+m + AMP + beta-nicotinamide D-nucleotide.. Functionally, DNA ligase that catalyzes the formation of phosphodiester linkages between 5'-phosphoryl and 3'-hydroxyl groups in double-stranded DNA using NAD as a coenzyme and as the energy source for the reaction. It is essential for DNA replication and repair of damaged DNA. The sequence is that of DNA ligase 1 from Nitratidesulfovibrio vulgaris (strain DP4) (Desulfovibrio vulgaris).